A 547-amino-acid chain; its full sequence is Glucose-6-phosphate isomerase (547 aa).

E353 functions as the Proton donor in the catalytic mechanism. Active-site residues include H384 and K512.

It belongs to the GPI family.

It is found in the cytoplasm. It carries out the reaction alpha-D-glucose 6-phosphate = beta-D-fructose 6-phosphate. It functions in the pathway carbohydrate biosynthesis; gluconeogenesis. Its pathway is carbohydrate degradation; glycolysis; D-glyceraldehyde 3-phosphate and glycerone phosphate from D-glucose: step 2/4. In terms of biological role, catalyzes the reversible isomerization of glucose-6-phosphate to fructose-6-phosphate. In Campylobacter jejuni subsp. doylei (strain ATCC BAA-1458 / RM4099 / 269.97), this protein is Glucose-6-phosphate isomerase.